A 608-amino-acid polypeptide reads, in one-letter code: RAS guanyl-releasing protein 2 (608 aa).

One can recognise an N-terminal Ras-GEF domain in the interval 4–126 (TLDLDKGCTV…SLIDIESVPT (123 aa)). 3 positions are modified to phosphoserine: Ser116, Ser117, and Ser147. A Ras-GEF domain is found at 154–387 (EPMELAEHLT…YQLSLQREPR (234 aa)). The segment at 382 to 405 (LQREPRSKSSPTSPTSCTPPPRPP) is disordered. 2 EF-hand domains span residues 426–461 (HIEKMVESVFRNFDVDGDGHISQEEFQIIRGNFPYL) and 463–490 (AFGDLDQNQDGCISREEMISYFLRSSSV). The Ca(2+) site is built by Asp439, Asp441, Asp443, His445, Glu450, Asp468, Asn470, Asp472, Cys474, and Glu479. Residues 498-548 (VHNFQESNSLRPVACRHCKALILGIYKQGLKCRACGVNCHKQCKERLSVEC) form a Phorbol-ester/DAG-type zinc finger. Ser554 and Ser575 each carry phosphoserine. The tract at residues 555–596 (VSLEGSAPSPSPTHTHHRAFSFSLPRPGRRSSRPPEIREEEV) is disordered.

The protein belongs to the RASGRP family. In terms of assembly, forms a signaling complex with RAP1 and BRAF. Interacts with F-actin. Interacts with RAP1. Detected in megakaryocytes, platelet and neutrophils but not in lymphocytes (at protein level). Isoform 1 and isoform 3 are detected in brain basal glanglia, heart, lung, spleen, liver and kidney interstitial cells.

The protein localises to the cytoplasm. It localises to the cytosol. Its subcellular location is the cell membrane. The protein resides in the synapse. It is found in the synaptosome. The protein localises to the cell projection. It localises to the ruffle membrane. Functions as a calcium- and DAG-regulated nucleotide exchange factor specifically activating Rap through the exchange of bound GDP for GTP. May also activate other GTPases such as RRAS, RRAS2, NRAS, KRAS but not HRAS. Functions in aggregation of platelets and adhesion of T-lymphocytes and neutrophils probably through inside-out integrin activation. May function in the muscarinic acetylcholine receptor M1/CHRM1 signaling pathway. This is RAS guanyl-releasing protein 2 (Rasgrp2) from Mus musculus (Mouse).